The primary structure comprises 3078 residues: Probable polyketide synthase 34 (3078 aa).

In terms of domain architecture, Ketosynthase family 3 (KS3) spans 28–462 (SGDVAVIGIG…GSNVCLILSE (435 aa)). Catalysis depends on for beta-ketoacyl synthase activity residues cysteine 200, histidine 339, and histidine 385. The acyl/malonyl transferase stretch occupies residues 665 to 698 (GVSADIIIGHSLGEISSSYCSGIIDFQTLCYLTY). The active-site For acyl/malonyl transferase activity is the serine 675. The segment at 954–1083 (HEKIKNEGPS…GNFSLTKHNI (130 aa)) is N-terminal hotdog fold. The region spanning 954 to 1264 (HEKIKNEGPS…CTIVGSNPDS (311 aa)) is the PKS/mFAS DH domain. The active-site Proton acceptor; for dehydratase activity is histidine 995. Residues 1099 to 1264 (NFTSISKQDL…CTIVGSNPDS (166 aa)) form a C-terminal hotdog fold region. Catalysis depends on aspartate 1171, which acts as the Proton donor; for dehydratase activity. The tract at residues 1375–1396 (NINNNNNNNNNNNNNNNNNSNG) is disordered. Residues 2541–2618 (DNNEIIRSTI…QSIEIIKSAH (78 aa)) enclose the Carrier domain. The residue at position 2578 (serine 2578) is an O-(pantetheine 4'-phosphoryl)serine. 2 disordered regions span residues 2617 to 2640 (AHNN…NNNN) and 2739 to 2761 (NKGS…DNNS). The span at 2619–2640 (NNNNNNNNNNNNNNNNNNNNNN) shows a compositional bias: low complexity. Residues 2621-2652 (NNNNNNNNNNNNNNNNNNNNLVKKEQQSLDEF) adopt a coiled-coil conformation.

The cofactor is pantetheine 4'-phosphate.

In terms of biological role, probable polyketide synthase. This Dictyostelium discoideum (Social amoeba) protein is Probable polyketide synthase 34 (pks34).